The sequence spans 537 residues: RNA polymerase sigma-54 factor 2 (537 aa).

The tract at residues 52 to 90 is disordered; it reads ANDEASGGEAPAEAGQFSDSDGGHNDEPGGGPGEAFEPG. Low complexity predominate over residues 55–66; it reads EASGGEAPAEAG. Residues 403–422 constitute a DNA-binding region (H-T-H motif); it reads NLKAVADAIQMHESTVSRVT. The short motif at 492–500 is the RPON box element; that stretch reads ARRTVAKYR. Residues 507 to 537 form a disordered region; the sequence is SSVQRRRDKQSALGNVLSTAMSDRSRNPEPA. Over residues 518 to 528 the composition is skewed to polar residues; that stretch reads ALGNVLSTAMS.

The protein belongs to the sigma-54 factor family.

Its function is as follows. Sigma factors are initiation factors that promote the attachment of RNA polymerase to specific initiation sites and are then released. This sigma factor is responsible for the expression of the nitrogen fixation genes. In Bradyrhizobium diazoefficiens (strain JCM 10833 / BCRC 13528 / IAM 13628 / NBRC 14792 / USDA 110), this protein is RNA polymerase sigma-54 factor 2 (rpoN2).